The sequence spans 859 residues: Chitin synthase 1 (859 aa).

The segment at 1-22 (MRRWFKKTLPRPPDEEESAGLT) is disordered. A run of 5 helical transmembrane segments spans residues 544-564 (LATI…FYIL), 615-635 (MVIM…WIAY), 662-682 (FINI…VSII), 793-813 (YVVL…LSIP), and 833-853 (LWSV…YLFI).

It belongs to the chitin synthase family.

The protein resides in the cell membrane. The enzyme catalyses [(1-&gt;4)-N-acetyl-beta-D-glucosaminyl](n) + UDP-N-acetyl-alpha-D-glucosamine = [(1-&gt;4)-N-acetyl-beta-D-glucosaminyl](n+1) + UDP + H(+). Its function is as follows. Polymerizes chitin, a structural polymer of the cell wall and septum, by transferring the sugar moiety of UDP-GlcNAc to the non-reducing end of the growing chitin polymer. The chain is Chitin synthase 1 (chs1) from Schizosaccharomyces pombe (strain 972 / ATCC 24843) (Fission yeast).